The primary structure comprises 1179 residues: DNA-directed RNA polymerase subunit beta' (1179 aa).

Positions 60, 62, 75, and 78 each coordinate Zn(2+). The Mg(2+) site is built by Asp-449, Asp-451, and Asp-453. The Zn(2+) site is built by Cys-796, Cys-871, Cys-878, and Cys-881.

This sequence belongs to the RNA polymerase beta' chain family. The RNAP catalytic core consists of 2 alpha, 1 beta, 1 beta' and 1 omega subunit. When a sigma factor is associated with the core the holoenzyme is formed, which can initiate transcription. Mg(2+) serves as cofactor. It depends on Zn(2+) as a cofactor.

The enzyme catalyses RNA(n) + a ribonucleoside 5'-triphosphate = RNA(n+1) + diphosphate. DNA-dependent RNA polymerase catalyzes the transcription of DNA into RNA using the four ribonucleoside triphosphates as substrates. This Symbiobacterium thermophilum (strain DSM 24528 / JCM 14929 / IAM 14863 / T) protein is DNA-directed RNA polymerase subunit beta'.